The following is a 100-amino-acid chain: Urease subunit gamma (100 aa).

Belongs to the urease gamma subunit family. Heterotrimer of UreA (gamma), UreB (beta) and UreC (alpha) subunits. Three heterotrimers associate to form the active enzyme.

It localises to the cytoplasm. It carries out the reaction urea + 2 H2O + H(+) = hydrogencarbonate + 2 NH4(+). It functions in the pathway nitrogen metabolism; urea degradation; CO(2) and NH(3) from urea (urease route): step 1/1. This Frankia alni (strain DSM 45986 / CECT 9034 / ACN14a) protein is Urease subunit gamma.